A 288-amino-acid chain; its full sequence is uncharacterized protein (288 aa).

The chain crosses the membrane as a helical span at residues 92–112 (LPTILVILGVIVVIAIVYAII). A disordered region spans residues 121-183 (DDHNAASEKA…NDSEKLEIKA (63 aa)). 2 stretches are compositionally biased toward basic and acidic residues: residues 136–146 (SKYEIPKDSTL) and 154–181 (SEKE…KLEI). A coiled-coil region spans residues 147–185 (KENQNNSSEKETDTKKETKENEDKKKENDSEKLEIKAAG).

It is found in the cell membrane. This is an uncharacterized protein from Bacillus subtilis (strain 168).